The chain runs to 1122 residues: Histidine kinase CKI1 (1122 aa).

Residues 1-12 (MMVKVTKLVASR) are Cytoplasmic-facing. Residues 13–33 (PIVVFCVLAFLVVVFECIWIS) form a helical membrane-spanning segment. Topologically, residues 34–345 (NWRTTTENLV…KHQAEKAKYQ (312 aa)) are extracellular. A helical transmembrane segment spans residues 346 to 366 (LIVVMIFLGFGWPVWFVWFMM). Residues 367–1122 (QATRREMHMR…VIREIESKRH (756 aa)) are Cytoplasmic-facing. One can recognise a Histidine kinase domain in the interval 402 to 671 (NASHDIRGAL…CFQFNVLLTT (270 aa)). His-405 is subject to Phosphohistidine; by autocatalysis. Over residues 918-928 (AERSPKHKVQE) the composition is skewed to basic and acidic residues. Residues 918–981 (AERSPKHKVQ…QETSKPSDDE (64 aa)) form a disordered region. In terms of domain architecture, Response regulatory spans 987–1120 (RVLVVDDNFI…ANVIREIESK (134 aa)). 4-aspartylphosphate is present on Asp-1050.

As to quaternary structure, homodimer. Interacts with AHP2 and AHP3. In terms of tissue distribution, expressed in vascular tissues of inflorescence stems and floral organs, especially in procambium cells, and in siliques.

The protein localises to the cell membrane. It catalyses the reaction ATP + protein L-histidine = ADP + protein N-phospho-L-histidine.. Essential protein. Functions as a histidine kinase and transmits the stress signal to a downstream MAPK cascade. This protein undergoes an ATP-dependent autophosphorylation at a conserved histidine residue in the kinase core, and a phosphoryl group is then transferred to a conserved aspartate residue in the receiver domain. Required for the development of megagametophyte in female gametophyte (embryo sac) independently of cytokinin. Contributes to vascular bundle formation and secondary growth in a cytokinin-independent manner, probably by promoting the maintenance of mitotic activity and/or identity of procambial cells. Seems to influence and promote the cytokinin signaling pathway. The sequence is that of Histidine kinase CKI1 (CKI1) from Arabidopsis thaliana (Mouse-ear cress).